We begin with the raw amino-acid sequence, 137 residues long: Small ribosomal subunit protein uS9 (137 aa).

Residues 118–137 (KERKKYGLRKARKAPQYSKR) form a disordered region.

This sequence belongs to the universal ribosomal protein uS9 family.

This Acaryochloris marina (strain MBIC 11017) protein is Small ribosomal subunit protein uS9.